Here is a 362-residue protein sequence, read N- to C-terminus: 3-dehydroquinate synthase (362 aa).

NAD(+)-binding positions include 71-76 (DGEQYK), 105-109 (GVIGD), 129-130 (TT), lysine 142, lysine 151, and 169-172 (CLST). Zn(2+) contacts are provided by glutamate 184, histidine 247, and histidine 264.

This sequence belongs to the sugar phosphate cyclases superfamily. Dehydroquinate synthase family. Co(2+) serves as cofactor. It depends on Zn(2+) as a cofactor. Requires NAD(+) as cofactor.

It localises to the cytoplasm. The catalysed reaction is 7-phospho-2-dehydro-3-deoxy-D-arabino-heptonate = 3-dehydroquinate + phosphate. Its pathway is metabolic intermediate biosynthesis; chorismate biosynthesis; chorismate from D-erythrose 4-phosphate and phosphoenolpyruvate: step 2/7. Its function is as follows. Catalyzes the conversion of 3-deoxy-D-arabino-heptulosonate 7-phosphate (DAHP) to dehydroquinate (DHQ). This chain is 3-dehydroquinate synthase, found in Vibrio atlanticus (strain LGP32) (Vibrio splendidus (strain Mel32)).